A 420-amino-acid chain; its full sequence is Serine hydroxymethyltransferase (420 aa).

(6S)-5,6,7,8-tetrahydrofolate-binding positions include Leu123 and 127–129; that span reads GHL. At Lys232 the chain carries N6-(pyridoxal phosphate)lysine. 357–359 provides a ligand contact to (6S)-5,6,7,8-tetrahydrofolate; that stretch reads SPF.

It belongs to the SHMT family. As to quaternary structure, homodimer. The cofactor is pyridoxal 5'-phosphate.

Its subcellular location is the cytoplasm. It catalyses the reaction (6R)-5,10-methylene-5,6,7,8-tetrahydrofolate + glycine + H2O = (6S)-5,6,7,8-tetrahydrofolate + L-serine. The protein operates within one-carbon metabolism; tetrahydrofolate interconversion. It functions in the pathway amino-acid biosynthesis; glycine biosynthesis; glycine from L-serine: step 1/1. Functionally, catalyzes the reversible interconversion of serine and glycine with tetrahydrofolate (THF) serving as the one-carbon carrier. This reaction serves as the major source of one-carbon groups required for the biosynthesis of purines, thymidylate, methionine, and other important biomolecules. Also exhibits THF-independent aldolase activity toward beta-hydroxyamino acids, producing glycine and aldehydes, via a retro-aldol mechanism. In Streptococcus pyogenes serotype M12 (strain MGAS2096), this protein is Serine hydroxymethyltransferase.